The sequence spans 173 residues: Co-chaperone protein HscB (173 aa).

The region spanning 2-74 (DYFTLFGLPA…LKRAEYMLSQ (73 aa)) is the J domain.

The protein belongs to the HscB family. As to quaternary structure, interacts with HscA and stimulates its ATPase activity. Interacts with IscU.

Co-chaperone involved in the maturation of iron-sulfur cluster-containing proteins. Seems to help targeting proteins to be folded toward HscA. This is Co-chaperone protein HscB from Xenorhabdus nematophila (strain ATCC 19061 / DSM 3370 / CCUG 14189 / LMG 1036 / NCIMB 9965 / AN6).